We begin with the raw amino-acid sequence, 337 residues long: Casein kinase I isoform alpha (337 aa).

Residues Tyr20–Phe288 form the Protein kinase domain. Residues Ile26–Ile34 and Lys49 contribute to the ATP site. Asp139 functions as the Proton acceptor in the catalytic mechanism.

It belongs to the protein kinase superfamily. CK1 Ser/Thr protein kinase family. Casein kinase I subfamily. Interacts with cos. Mg(2+) serves as cofactor. Post-translationally, phosphorylated. The dephosphorylated kinase is active in the cytoplasm while the active kinase in the nucleus is phosphorylated.

Its subcellular location is the cytoplasm. The protein localises to the nucleus. It catalyses the reaction L-seryl-[protein] + ATP = O-phospho-L-seryl-[protein] + ADP + H(+). It carries out the reaction L-threonyl-[protein] + ATP = O-phospho-L-threonyl-[protein] + ADP + H(+). Activity increases following DNA damage. Casein kinases are operationally defined by their preferential utilization of acidic proteins such as caseins as substrates. Can phosphorylate a large number of proteins. Negative regulator of wg signaling. Phosphorylates arm directly or indirectly and stimulates its degradation which prevents inappropriate wg signaling. Phosphorylates smo which promotes its accumulation at the cell surface and its signaling activity in response to hh. Together with dco, regulates proteolytic processing of ci by phosphorylating it, which promotes its binding to slmb, the F-box recognition component of the SCF(slmb) E3 ubiquitin-protein ligase required for ci processing. Inhibits condensin II interphase activity by promoting degradation of the Cap-H2 regulatory subunit and limiting the levels of chromatin-bound Cap-H2 which regulates interphase chromosome organization. The protein is Casein kinase I isoform alpha (CkIalpha) of Drosophila melanogaster (Fruit fly).